Consider the following 953-residue polypeptide: Kinesin-like protein KIF23 (953 aa).

A Nuclear localization signal motif is present at residues 7-11 (KTVRK). Residues 25–436 (PVGVYCRVRP…MRFAEVTQEV (412 aa)) enclose the Kinesin motor domain. ATP is bound at residue 112 to 119 (GVTGSGKT). 2 positions are modified to phosphoserine: S155 and S160. Residues 542 to 618 (QEKLNEREKV…RRLEARLQGM (77 aa)) adopt a coiled-coil conformation. Glycyl lysine isopeptide (Lys-Gly) (interchain with G-Cter in SUMO2) cross-links involve residues K572 and K587. At S606 the chain carries Phosphoserine. Glycyl lysine isopeptide (Lys-Gly) (interchain with G-Cter in SUMO2) cross-links involve residues K625, K648, K663, and K666. A disordered region spans residues 658 to 695 (IVTEPKPEKPERPSRERDREKIIPRSVSPSPLPLSSNN). Positions 662–680 (PKPEKPERPSRERDREKII) are enriched in basic and acidic residues. Over residues 681–693 (PRSVSPSPLPLSS) the composition is skewed to low complexity. A phosphoserine mark is found at S683 and S685. The residue at position 739 (T739) is a Phosphothreonine. A Phosphoserine modification is found at S807. Glycyl lysine isopeptide (Lys-Gly) (interchain with G-Cter in SUMO2) cross-links involve residues K816 and K847. S860 carries the phosphoserine modification. Glycyl lysine isopeptide (Lys-Gly) (interchain with G-Cter in SUMO2) cross-links involve residues K867, K870, and K892. Disordered stretches follow at residues 894–921 (ELPT…EWTD) and 934–953 (AGSQ…RKKP). Phosphoserine is present on S904. Position 920 is a phosphothreonine (T920). K949 participates in a covalent cross-link: Glycyl lysine isopeptide (Lys-Gly) (interchain with G-Cter in SUMO2).

It belongs to the TRAFAC class myosin-kinesin ATPase superfamily. Kinesin family. Heterotetramer of two molecules each of RACGAP1 and KIF23. Found in the centralspindlin complex. Interacts with RACGAP1; the interaction is direct. Interacts with ECT2 and PRC1. Interacts with ANXA11 during cytokinesis. Interacts with BIRC6/bruce and USP8/UBPY. Interacts with ARF6, forming heterodimers and heterotetramers. Post-translationally, ubiquitinated. Deubiquitinated by USP8/UBPY. As to expression, detected in testis and ovary from newborn mice (at protein level). Detected in brain, spinal cord and small intestine.

The protein resides in the nucleus. Its subcellular location is the cytoplasm. It localises to the cytoskeleton. It is found in the spindle. The protein localises to the midbody. The protein resides in the midbody ring. In terms of biological role, component of the centralspindlin complex that serves as a microtubule-dependent and Rho-mediated signaling required for the myosin contractile ring formation during the cell cycle cytokinesis. Essential for cytokinesis in Rho-mediated signaling. Required for the localization of ECT2 to the central spindle. Plus-end-directed motor enzyme that moves antiparallel microtubules in vitro. This is Kinesin-like protein KIF23 (Kif23) from Mus musculus (Mouse).